The following is a 79-amino-acid chain: Small ribosomal subunit protein uS17 (79 aa).

It belongs to the universal ribosomal protein uS17 family. Part of the 30S ribosomal subunit.

Its function is as follows. One of the primary rRNA binding proteins, it binds specifically to the 5'-end of 16S ribosomal RNA. The chain is Small ribosomal subunit protein uS17 from Paramagnetospirillum magneticum (strain ATCC 700264 / AMB-1) (Magnetospirillum magneticum).